The chain runs to 295 residues: Glutamyl-Q tRNA(Asp) synthetase (295 aa).

Residues 9 to 13 (RFAPT) and E45 each bind L-glutamate. The short motif at 12-22 (PTPSGFLHFGS) is the 'HIGH' region element. Residues C101, C103, Y115, and C119 each coordinate Zn(2+). L-glutamate-binding residues include Y172 and R190. The 'KMSKS' region motif lies at 228–232 (KLGKS). K231 serves as a coordination point for ATP.

Belongs to the class-I aminoacyl-tRNA synthetase family. GluQ subfamily. Requires Zn(2+) as cofactor.

Catalyzes the tRNA-independent activation of glutamate in presence of ATP and the subsequent transfer of glutamate onto a tRNA(Asp). Glutamate is transferred on the 2-amino-5-(4,5-dihydroxy-2-cyclopenten-1-yl) moiety of the queuosine in the wobble position of the QUC anticodon. The protein is Glutamyl-Q tRNA(Asp) synthetase of Pseudomonas putida (strain W619).